Reading from the N-terminus, the 115-residue chain is MLPLCLTFLSFFLSLGGSFKAVMTKEEADGTTEAAACLFWIFNWTVTLIPLNSLVALAISSPTFFGDRPKGPIFGAKAAEAPTSPPTALRYKYLTSLGSNFGGIFVYPLFLLSTF.

The N-terminal stretch at 1–24 is a signal peptide; the sequence is MLPLCLTFLSFFLSLGGSFKAVMT. Helical transmembrane passes span 39–59 and 93–113; these read FWIF…ALAI and YLTS…FLLS.

It localises to the membrane. This is an uncharacterized protein from Saccharomyces cerevisiae (strain ATCC 204508 / S288c) (Baker's yeast).